A 593-amino-acid chain; its full sequence is Serine/threonine-protein kinase PAK 4 (593 aa).

Residues 11 to 24 (ISAPSNFEHRVHTG) enclose the CRIB domain. The interval 25 to 322 (FDQHEQKFTG…VVDPGDPRSY (298 aa)) is linker. Serine 41 is modified (phosphoserine). An N6-methyllysine modification is found at lysine 78. Residues 95–303 (TRSNSLRRES…PQREPQRVSH (209 aa)) are disordered. A Phosphoserine modification is found at serine 104. The segment covering 118–133 (LEERAAPARMAPDKAG) has biased composition (basic and acidic residues). Serine 148 bears the Phosphoserine mark. Over residues 149–164 (GDRRRVGPEKRPKSSR) the composition is skewed to basic and acidic residues. Serine 181 carries the phosphoserine modification. A compositionally biased stretch (polar residues) spans 184 to 197 (DVSTPQPGSLTSGT). A Phosphothreonine modification is found at threonine 187. At serine 195 the chain carries Phosphoserine. Threonine 207 carries the phosphothreonine modification. The segment covering 238–258 (AAPQSSSSSRPPTRARGAPSP) has biased composition (low complexity). Residues serine 257 and serine 266 each carry the phosphoserine modification. Residues 267 to 280 (EPQLAPPARALAAP) show a composition bias toward low complexity. Over residues 281–292 (AVPPAPGPPGPR) the composition is skewed to pro residues. The residue at position 293 (serine 293) is a Phosphoserine. A compositionally biased stretch (basic and acidic residues) spans 294-303 (PQREPQRVSH). In terms of domain architecture, Protein kinase spans 323 to 574 (LDNFIKIGEG…AAELLKHPFL (252 aa)). Residues 329–337 (IGEGSTGIV) and lysine 352 each bind ATP. Aspartate 442 (proton acceptor) is an active-site residue. Residue serine 476 is modified to Phosphoserine; by autocatalysis.

The protein belongs to the protein kinase superfamily. STE Ser/Thr protein kinase family. STE20 subfamily. Interacts tightly with GTP-bound but not GDP-bound CDC42/p21 and weakly with RAC1. Interacts with FGFR2 and GRB2. Interacts with INKA1. Interacts with SH3RF2. Interacts with RHOU and PAXI; the PAK4-RHOU complex protects RHOU from ubiquitination and acts as a scaffold to suppport paxillin/PAXI phosphorylation. In terms of processing, autophosphorylated on serine residues when activated by CDC42/p21. Phosphorylated on tyrosine residues upon stimulation of FGFR2. Methylated by SETD6. Post-translationally, polyubiquitinated, leading to its proteasomal degradation.

Its subcellular location is the cytoplasm. It catalyses the reaction L-seryl-[protein] + ATP = O-phospho-L-seryl-[protein] + ADP + H(+). It carries out the reaction L-threonyl-[protein] + ATP = O-phospho-L-threonyl-[protein] + ADP + H(+). With respect to regulation, inhibited by INKA1; which inhibits the serine/threonine-protein kinase activity by binding PAK4 in a substrate-like manner. In terms of biological role, serine/threonine protein kinase that plays a role in a variety of different signaling pathways including cytoskeleton regulation, cell migration, growth, proliferation or cell survival. Activation by various effectors including growth factor receptors or active CDC42 and RAC1 results in a conformational change and a subsequent autophosphorylation on several serine and/or threonine residues. Phosphorylates and inactivates the protein phosphatase SSH1, leading to increased inhibitory phosphorylation of the actin binding/depolymerizing factor cofilin. Decreased cofilin activity may lead to stabilization of actin filaments. Phosphorylates LIMK1, a kinase that also inhibits the activity of cofilin. Phosphorylates integrin beta5/ITGB5 and thus regulates cell motility. Phosphorylates ARHGEF2 and activates the downstream target RHOA that plays a role in the regulation of assembly of focal adhesions and actin stress fibers. Stimulates cell survival by phosphorylating the BCL2 antagonist of cell death BAD. Alternatively, inhibits apoptosis by preventing caspase-8 binding to death domain receptors in a kinase independent manner. Plays a role in cell-cycle progression by controlling levels of the cell-cycle regulatory protein CDKN1A and by phosphorylating RAN. Promotes kinase-independent stabilization of RHOU, thereby contributing to focal adhesion disassembly during cell migration. The protein is Serine/threonine-protein kinase PAK 4 of Mus musculus (Mouse).